The following is a 981-amino-acid chain: Alpha-mannosidase (981 aa).

Zn(2+) is bound by residues His23, Asp25, and Asp145. Catalysis depends on Asp145, which acts as the Nucleophile. Asn312 is a glycosylation site (N-linked (GlcNAc...) asparagine). His386 provides a ligand contact to Zn(2+). 3 disulfides stabilise this stretch: Cys422-Cys432, Cys442-Cys450, and Cys800-Cys807. A glycan (N-linked (GlcNAc...) asparagine) is linked at Asn446. Positions 938–957 (KKMKWSVEGDNEQEPQAVRG) are disordered.

Belongs to the glycosyl hydrolase 38 family. As to quaternary structure, dimer of dimers of heavy and light subunits. The cofactor is Zn(2+). Post-translationally, produced as a precursor which is then proteolytically cleaved into a 66kD heavy subunit and a 44kD light subunit. Cleavage probably occurs in protein bodies/protein storage vacuoles.

The protein localises to the protein storage vacuole. The enzyme catalyses Hydrolysis of terminal, non-reducing alpha-D-mannose residues in alpha-D-mannosides.. With respect to regulation, inhibited by 2,3,4,6-tetra-O-acetyl-5-fluoro-beta-L-gulopyranosyl fluoride which acts as a slow substrate, doubling as a competitive inhibitor as it forms a high steady state concentration of glycosyl-enzyme intermediate that blocks the active site. Inhibited by 2,3,4,6-tetra-O-acetyl-5-fluoro-alpha-D-mannopyranosyl fluoride which also acts as a slow substrate but no intermediates accumulate. Inhibited by EDTA. Inhibited by metal ion Cu(2+). Inhibited by metal ions Fe(2+), Cd(2+) and Co(2+). Inhibited by metal ions Ag(+) and Hg(2+). Competitively inhibited by mannono-1-4-lactone and mannono-1-5-lactone. Inhibited by swainsonine but not by 1-desoxymannojirimycin. Inhibited by pyrrolidine-3,4-diol derivatives. In terms of biological role, liberates mannose from p-nitrophenyl-alpha-D-mannoside. Liberates mannose from further alpha-D-mannosides including methyl-, benzyl-alpha-D-mannoside, 1-6-linked di-, tri- and tetrasaccharides of alpha-D-mannose and mannosyl-rhamnose. Liberates mannose from various glycoproteins like ovalbumin and ovomucoid. Does not hydrolyze beta-D-mannosides. Has glycosyltransferase activity, forming disaccharides from mannose and lyxose but not from glucose, galactose, ribose, xylose or arabinose. The chain is Alpha-mannosidase from Canavalia ensiformis (Jack bean).